The following is a 51-amino-acid chain: Lipid-anchored plasma membrane protein CPP3 (51 aa).

Residues 1 to 28 (MRHHQNMHYAPQQQPVYVQQPPPRRESG) form a disordered region.

This sequence belongs to the CYSTM1 family. Post-translationally, palmitoylated near the C-terminus.

Its subcellular location is the cell membrane. This Saccharomyces cerevisiae (strain ATCC 204508 / S288c) (Baker's yeast) protein is Lipid-anchored plasma membrane protein CPP3.